A 164-amino-acid chain; its full sequence is Cyclic pyranopterin monophosphate synthase (164 aa).

Residues M75–H77 and M116–E117 each bind substrate. D131 is a catalytic residue.

It belongs to the MoaC family. In terms of assembly, homohexamer; trimer of dimers.

It carries out the reaction (8S)-3',8-cyclo-7,8-dihydroguanosine 5'-triphosphate = cyclic pyranopterin phosphate + diphosphate. It functions in the pathway cofactor biosynthesis; molybdopterin biosynthesis. In terms of biological role, catalyzes the conversion of (8S)-3',8-cyclo-7,8-dihydroguanosine 5'-triphosphate to cyclic pyranopterin monophosphate (cPMP). The chain is Cyclic pyranopterin monophosphate synthase from Staphylococcus aureus (strain MSSA476).